We begin with the raw amino-acid sequence, 388 residues long: Formate-dependent phosphoribosylglycinamide formyltransferase (388 aa).

N(1)-(5-phospho-beta-D-ribosyl)glycinamide-binding positions include 20–21 (EL) and Glu-80. Residues Arg-112, Lys-153, 158 to 163 (SSGKGQ), 193 to 196 (EEFV), and Glu-201 each bind ATP. An ATP-grasp domain is found at 117 to 306 (RLASEKLGLR…EFEIHVRSIL (190 aa)). Positions 265 and 277 each coordinate Mg(2+). N(1)-(5-phospho-beta-D-ribosyl)glycinamide is bound by residues Asp-284, Lys-352, and 359-360 (RR).

It belongs to the PurK/PurT family. As to quaternary structure, homodimer.

It carries out the reaction N(1)-(5-phospho-beta-D-ribosyl)glycinamide + formate + ATP = N(2)-formyl-N(1)-(5-phospho-beta-D-ribosyl)glycinamide + ADP + phosphate + H(+). It participates in purine metabolism; IMP biosynthesis via de novo pathway; N(2)-formyl-N(1)-(5-phospho-D-ribosyl)glycinamide from N(1)-(5-phospho-D-ribosyl)glycinamide (formate route): step 1/1. Involved in the de novo purine biosynthesis. Catalyzes the transfer of formate to 5-phospho-ribosyl-glycinamide (GAR), producing 5-phospho-ribosyl-N-formylglycinamide (FGAR). Formate is provided by PurU via hydrolysis of 10-formyl-tetrahydrofolate. The polypeptide is Formate-dependent phosphoribosylglycinamide formyltransferase (Methanococcus vannielii (strain ATCC 35089 / DSM 1224 / JCM 13029 / OCM 148 / SB)).